The sequence spans 213 residues: NAD(P)H-hydrate epimerase (213 aa).

In terms of domain architecture, YjeF N-terminal spans 8–210 (MYNIEENGHA…KIGIPPEAEK (203 aa)). 55 to 59 (NNGGD) is a binding site for (6S)-NADPHX. 2 residues coordinate K(+): Asn56 and Asp122. (6S)-NADPHX-binding positions include 126 to 132 (GTGITGE), Tyr137, and Asp155. Ser158 contacts K(+).

It belongs to the NnrE/AIBP family. K(+) serves as cofactor.

The catalysed reaction is (6R)-NADHX = (6S)-NADHX. It catalyses the reaction (6R)-NADPHX = (6S)-NADPHX. Functionally, catalyzes the epimerization of the S- and R-forms of NAD(P)HX, a damaged form of NAD(P)H that is a result of enzymatic or heat-dependent hydration. This is a prerequisite for the S-specific NAD(P)H-hydrate dehydratase to allow the repair of both epimers of NAD(P)HX. The chain is NAD(P)H-hydrate epimerase from Cenarchaeum symbiosum (strain A).